The sequence spans 237 residues: Uridylate kinase (237 aa).

Position 10–13 (10–13 (KLSG)) interacts with ATP. UMP is bound at residue glycine 52. Positions 53 and 57 each coordinate ATP. Residues aspartate 72 and 133-140 (TGNPFFTT) contribute to the UMP site. 3 residues coordinate ATP: threonine 160, tyrosine 166, and aspartate 169.

This sequence belongs to the UMP kinase family. In terms of assembly, homohexamer.

Its subcellular location is the cytoplasm. It carries out the reaction UMP + ATP = UDP + ADP. It participates in pyrimidine metabolism; CTP biosynthesis via de novo pathway; UDP from UMP (UMPK route): step 1/1. Its activity is regulated as follows. Inhibited by UTP. Functionally, catalyzes the reversible phosphorylation of UMP to UDP. This is Uridylate kinase from Thiobacillus denitrificans (strain ATCC 25259 / T1).